The following is a 325-amino-acid chain: Biotin synthase (325 aa).

The 219-residue stretch at 49-267 (TQVQISTLLS…IAAARISMPR (219 aa)) folds into the Radical SAM core domain. [4Fe-4S] cluster is bound by residues Cys-64, Cys-68, and Cys-71. Positions 108, 139, 199, and 271 each coordinate [2Fe-2S] cluster.

The protein belongs to the radical SAM superfamily. Biotin synthase family. Homodimer. It depends on [4Fe-4S] cluster as a cofactor. [2Fe-2S] cluster serves as cofactor.

The catalysed reaction is (4R,5S)-dethiobiotin + (sulfur carrier)-SH + 2 reduced [2Fe-2S]-[ferredoxin] + 2 S-adenosyl-L-methionine = (sulfur carrier)-H + biotin + 2 5'-deoxyadenosine + 2 L-methionine + 2 oxidized [2Fe-2S]-[ferredoxin]. It functions in the pathway cofactor biosynthesis; biotin biosynthesis; biotin from 7,8-diaminononanoate: step 2/2. Catalyzes the conversion of dethiobiotin (DTB) to biotin by the insertion of a sulfur atom into dethiobiotin via a radical-based mechanism. This chain is Biotin synthase, found in Acidiphilium cryptum (strain JF-5).